The following is a 166-amino-acid chain: Regulatory protein RecX (166 aa).

The protein belongs to the RecX family.

Its subcellular location is the cytoplasm. Modulates RecA activity. In Klebsiella pneumoniae (strain 342), this protein is Regulatory protein RecX.